The following is a 334-amino-acid chain: Pantothenate synthetase (334 aa).

ATP is bound at residue 34-41; sequence MGALHEGH. Residue histidine 41 is the Proton donor of the active site. Glutamine 71 provides a ligand contact to (R)-pantoate. Glutamine 71 lines the beta-alanine pocket. 158-161 contacts ATP; that stretch reads GQKD. Residue glutamine 164 participates in (R)-pantoate binding. ATP contacts are provided by residues valine 187 and 195–198; that span reads LSSR. The disordered stretch occupies residues 288 to 334; that stretch reads PLMLGTRGPAGEASPPNRERSEPGSAEQNKSPGEARTTPSGTSEASE. The span at 313 to 334 shows a compositional bias: polar residues; the sequence is AEQNKSPGEARTTPSGTSEASE.

It belongs to the pantothenate synthetase family. Homodimer.

The protein resides in the cytoplasm. The enzyme catalyses (R)-pantoate + beta-alanine + ATP = (R)-pantothenate + AMP + diphosphate + H(+). It participates in cofactor biosynthesis; (R)-pantothenate biosynthesis; (R)-pantothenate from (R)-pantoate and beta-alanine: step 1/1. In terms of biological role, catalyzes the condensation of pantoate with beta-alanine in an ATP-dependent reaction via a pantoyl-adenylate intermediate. This Nocardioides sp. (strain ATCC BAA-499 / JS614) protein is Pantothenate synthetase.